The primary structure comprises 396 residues: KiSS-1 receptor (396 aa).

The Extracellular portion of the chain corresponds to 1-43 (MATEATLAPNVTWWAPSNASGCPGCGVNASDDPGSAPRPLDAW). Residues asparagine 10, asparagine 18, and asparagine 28 are each glycosylated (N-linked (GlcNAc...) asparagine). Residues 44-66 (LVPLFFATLMLLGLVGNSLVIYV) form a helical membrane-spanning segment. At 67–78 (ICRHKHMQTVTN) the chain is on the cytoplasmic side. Residues 79 to 101 (FYIANLAATDVTFLLCCVPFTAL) form a helical membrane-spanning segment. Residues 102 to 116 (LYPLPAWVLGDFMCK) lie on the Extracellular side of the membrane. A disulfide bond links cysteine 115 and cysteine 191. Residues 117–138 (FVNYIQQVSVQATCATLTAMSV) traverse the membrane as a helical segment. Topologically, residues 139–157 (DRWYVTVFPLRALHRRTPR) are cytoplasmic. Residues 158-180 (LALAVSLSIWVGSAAVSAPVLAL) form a helical membrane-spanning segment. Over 181–203 (HRLSPGPRTYCSEAFPSRALERA) the chain is Extracellular. The chain crosses the membrane as a helical span at residues 204–224 (FALYNLLALYLLPLLATCACY). Residues 225–260 (GAMLRHLGRAAVRPAPTDGALQGQLLAQRAGAVRTK) lie on the Cytoplasmic side of the membrane. Residues 261 to 283 (VSRLVAAVVLLFAACWGPIQLFL) traverse the membrane as a helical segment. Residues 284–305 (VLQALGPSGAWHPRSYAAYAVK) are Extracellular-facing. A helical transmembrane segment spans residues 306–330 (IWAHCMSYSNSALNPLLYAFLGSHF). Over 331-396 (RQAFCRVCPC…CAQSERTASL (66 aa)) the chain is Cytoplasmic. Residues 349–396 (HTSAHSDRAATHTVPHSRAAHPVRIRSPEPGNPVVRSPCAQSERTASL) are disordered. Residues 387 to 396 (CAQSERTASL) are compositionally biased toward polar residues.

This sequence belongs to the G-protein coupled receptor 1 family. In terms of tissue distribution, highest level in the heart and 15- and 17-day embryos. Low level in other tissues. Colocalized with gonadotropin-releasing hormone (GnRH) neurons in the hypothalamus.

The protein localises to the cell membrane. In terms of biological role, receptor for metastin (kisspeptin-52 or kp-52), a C-terminally amidated peptide of KiSS1. KiSS1 is a metastasis suppressor protein. Activation of the receptor inhibits cell proliferation and cell migration, key characteristics of tumor metastasis. The receptor is essential for normal gonadotropin-released hormone physiology and for puberty. The hypothalamic KiSS1/KISS1R system is a pivotal factor in central regulation of the gonadotropic axis at puberty and in adulthood. Analysis of the transduction pathways activated by the receptor identifies coupling to phospholipase C and intracellular calcium release through pertussis toxin-insensitive G(q) proteins. This is KiSS-1 receptor (Kiss1r) from Mus musculus (Mouse).